The chain runs to 1336 residues: Mating factor M secretion protein mam1 (1336 aa).

The tract at residues 1–29 (MHIHSDLSLPQFEHASIDPPSYSPQKSSF) is disordered. At 1-91 (MHIHSDLSLP…ELAGVSSWSD (91 aa)) the chain is on the cytoplasmic side. A helical transmembrane segment spans residues 92–112 (FFYLFHFSDIPLIFGTLIFTC). Residues 104–396 (IFGTLIFTCL…ILPAIPDLIK (293 aa)) form the ABC transmembrane type-1 1 domain. At 113 to 153 (LSAALEPLMTWTTGKVFDALSQYATSQITLGKMISLINFNS) the chain is on the extracellular side. Residues 154-174 (LLITIFGLASCVFSFGVRFLW) form a helical membrane-spanning segment. Over 175–250 (QYLSAIAGKR…SCLIISFRYS (76 aa)) the chain is Cytoplasmic. A helical membrane pass occupies residues 251-271 (WSLTLVVLASYPIIILVVGFI). The Extracellular segment spans residues 272–778 (NSFLSSAYEK…KSIWKVKKLR (507 aa)). One can recognise an ABC transporter 1 domain in the interval 433–668 (FRFDNVSFAY…EDFENNVSID (236 aa)). N-linked (GlcNAc...) asparagine glycosylation is found at asparagine 437 and asparagine 454. 469-476 (GPSGSGKS) contributes to the ATP binding site. 3 N-linked (GlcNAc...) asparagine glycosylation sites follow: asparagine 536, asparagine 664, and asparagine 697. Residues 779-799 (WFFLLGLLTSLIQGASVPIFA) traverse the membrane as a helical segment. One can recognise an ABC transmembrane type-1 2 domain in the interval 781–1066 (FLLGLLTSLI…CIMSLPNVSA (286 aa)). Over 800–897 (YVISKCLNLF…ISDMRNMISS (98 aa)) the chain is Cytoplasmic. The chain crosses the membrane as a helical span at residues 898–918 (LIEEVFIAFTMAIIGIAWSFA). Residues 919–1336 (TGWRLAAVLV…KLIHRGEWIE (418 aa)) are Extracellular-facing. 3 N-linked (GlcNAc...) asparagine glycosylation sites follow: asparagine 1011, asparagine 1063, and asparagine 1120. The region spanning 1099 to 1331 (IEFDGVSFAY…HTHFWKLIHR (233 aa)) is the ABC transporter 2 domain. 1135–1142 (GISGSGKS) is a binding site for ATP. N-linked (GlcNAc...) asparagine glycosylation is found at asparagine 1235 and asparagine 1280.

It belongs to the ABC transporter superfamily. Alpha-factor sex pheromone exporter (TC 3.A.1.206) family.

The protein resides in the membrane. Required in S.pombe M (minus) cells for production of M-factor pheromone. Involved in the transport of the farnesyl-derivation of the M-factor pheromone. This Schizosaccharomyces pombe (strain 972 / ATCC 24843) (Fission yeast) protein is Mating factor M secretion protein mam1 (mam1).